The chain runs to 1342 residues: DNA-directed RNA polymerase subunit beta (1342 aa).

Belongs to the RNA polymerase beta chain family. In terms of assembly, the RNAP catalytic core consists of 2 alpha, 1 beta, 1 beta' and 1 omega subunit. When a sigma factor is associated with the core the holoenzyme is formed, which can initiate transcription.

The catalysed reaction is RNA(n) + a ribonucleoside 5'-triphosphate = RNA(n+1) + diphosphate. DNA-dependent RNA polymerase catalyzes the transcription of DNA into RNA using the four ribonucleoside triphosphates as substrates. This is DNA-directed RNA polymerase subunit beta from Klebsiella pneumoniae subsp. pneumoniae (strain ATCC 700721 / MGH 78578).